We begin with the raw amino-acid sequence, 100 residues long: Integration host factor subunit alpha (100 aa).

A disordered region spans residues 54 to 73 (DLRDKRQRPGRNPKTGEEIP).

Belongs to the bacterial histone-like protein family. In terms of assembly, heterodimer of an alpha and a beta chain.

This protein is one of the two subunits of integration host factor, a specific DNA-binding protein that functions in genetic recombination as well as in transcriptional and translational control. The sequence is that of Integration host factor subunit alpha from Pseudomonas savastanoi pv. phaseolicola (strain 1448A / Race 6) (Pseudomonas syringae pv. phaseolicola (strain 1448A / Race 6)).